A 337-amino-acid chain; its full sequence is Zinc finger protein 488 (337 aa).

Residues 1 to 10 (MAAGTSTLLS) show a composition bias toward polar residues. Disordered stretches follow at residues 1-32 (MAAG…SVEK), 55-83 (SDTA…PRLD), and 146-179 (SAWP…MLLA). The important for transcriptional repression activity stretch occupies residues 69 to 184 (TELSLPTAPN…PMLLAGGSAE (116 aa)). 2 C2H2-type zinc fingers span residues 272–299 (NWCA…KREH) and 314–336 (LTCP…MASH). The Nuclear localization signal signature appears at 295-302 (HKREHVGP).

This sequence belongs to the krueppel C2H2-type zinc-finger protein family. In terms of assembly, interacts with OLIG2.

The protein localises to the nucleus. Its function is as follows. Transcriptional repressor. Plays a role in oligodendrocyte differentiation, together with OLIG2. Mediates Notch signaling-activated formation of oligodendrocyte precursors. Promotes differentiation of adult neural stem progenitor cells (NSPCs) into mature oligodendrocytes and contributes to remyelination following nerve injury. The chain is Zinc finger protein 488 (Znf488) from Mus musculus (Mouse).